The following is a 145-amino-acid chain: Small ribosomal subunit protein bS16 (145 aa).

Residues 82-145 are disordered; it reads IKERAATNNP…EAAAEEQTEA (64 aa). Basic and acidic residues predominate over residues 95–115; the sequence is EPGKKAKERAEERAEKAREAA. Low complexity predominate over residues 116 to 137; the sequence is EAAAAAAAAPAEEAAAEAPAEA.

The protein belongs to the bacterial ribosomal protein bS16 family.

The chain is Small ribosomal subunit protein bS16 from Novosphingobium aromaticivorans (strain ATCC 700278 / DSM 12444 / CCUG 56034 / CIP 105152 / NBRC 16084 / F199).